A 149-amino-acid chain; its full sequence is IQ domain-containing protein F5 (149 aa).

IQ domains follow at residues 12–41 (ENKA…RAWI) and 68–97 (QEWA…AVRI).

In Bos taurus (Bovine), this protein is IQ domain-containing protein F5 (IQCF5).